The chain runs to 1044 residues: Isoleucine--tRNA ligase (1044 aa).

Positions 49–59 (PYCSGRIHLGT) match the 'HIGH' region motif. The 'KMSKS' region signature appears at 591-595 (KMSKS). Lysine 594 is a binding site for ATP.

This sequence belongs to the class-I aminoacyl-tRNA synthetase family. IleS type 2 subfamily. In terms of assembly, monomer. Requires Zn(2+) as cofactor.

It localises to the cytoplasm. The catalysed reaction is tRNA(Ile) + L-isoleucine + ATP = L-isoleucyl-tRNA(Ile) + AMP + diphosphate. In terms of biological role, catalyzes the attachment of isoleucine to tRNA(Ile). As IleRS can inadvertently accommodate and process structurally similar amino acids such as valine, to avoid such errors it has two additional distinct tRNA(Ile)-dependent editing activities. One activity is designated as 'pretransfer' editing and involves the hydrolysis of activated Val-AMP. The other activity is designated 'posttransfer' editing and involves deacylation of mischarged Val-tRNA(Ile). The sequence is that of Isoleucine--tRNA ligase from Methanothermobacter thermautotrophicus (strain ATCC 29096 / DSM 1053 / JCM 10044 / NBRC 100330 / Delta H) (Methanobacterium thermoautotrophicum).